The sequence spans 146 residues: UPF0178 protein Helmi_09130 (146 aa).

Belongs to the UPF0178 family.

The sequence is that of UPF0178 protein Helmi_09130 from Heliobacterium modesticaldum (strain ATCC 51547 / Ice1).